The primary structure comprises 468 residues: MCDLIEPQPAEKIGKMKKLRRTLSESFSRIALKKEDTTFDEICVTKMSTRNCQGMDSVIKPLDTIPEDKVRVQRTQSTFDPFEKPTNQVKRVHSENNACINFKTSSAGKESPKVRRHSSPSSPTSPKFGKADSYEKLEKLGEGSYATVYKGKSKVNGKLVALKVIRLQEEEGTPFTAIREASLLKGLKHANIVLLHDIIHTKETLTLVFEYVHTDLCQYMDKHPGGLHPENVKLFLFQLLRGLSYIHQRYILHRDLKPQNLLISDTGELKLADFGLARAKSVPSHTYSNEVVTLWYRPPDVLLGSTEYSTCLDMWGVGCIFVEMIQGVAAFPGMKDIQDQLERIFLVLGTPNEDTWPGVHSLPHFKPERFTLYSSKNLRQAWNKLSYVNHAEDLASKLLQCSPKNRLSAQAALSHEYFSDLPPRLWELTDMSSIFTVPNVRLQPEAGESMRAFGKNNSYGKSLSNSKH.

Phosphoserine occurs at positions 24, 77, and 94. The segment at lysine 103–aspartate 132 is disordered. Serine 133 carries the phosphoserine modification. The Protein kinase domain maps to tyrosine 134–phenylalanine 418. Residues leucine 140–valine 148 and lysine 163 each bind ATP. Aspartate 255 serves as the catalytic Proton acceptor. The disordered stretch occupies residues glutamate 448–histidine 468. A compositionally biased stretch (polar residues) spans lysine 455 to histidine 468.

Belongs to the protein kinase superfamily. CMGC Ser/Thr protein kinase family. CDC2/CDKX subfamily. In terms of assembly, found in a complex with LRP6, CCNY and CAPRIN2 during G2/M stage; CAPRIN2 functions as a scaffold for the complex by binding to CCNY via its N terminus and to CDK14 via its C terminus. Interacts with CCNY; CCNY mediates its recruitment to the plasma membrane and promotes phosphorylation of LRP6. Interacts with CCDN3 and CDKN1A. Interacts with SEPT8. Interacts with 14-3-3 proteina YWHAB, YWHAE, YWHAH and YWHAQ.

It localises to the cell membrane. Its subcellular location is the cytoplasm. The protein resides in the nucleus. The catalysed reaction is L-seryl-[protein] + ATP = O-phospho-L-seryl-[protein] + ADP + H(+). It catalyses the reaction L-threonyl-[protein] + ATP = O-phospho-L-threonyl-[protein] + ADP + H(+). Serine/threonine-protein kinase activity is promoted by associated cyclins CCDN3 and CCNY and repressed by CDKN1A. Its function is as follows. Serine/threonine-protein kinase involved in the control of the eukaryotic cell cycle, whose activity is controlled by an associated cyclin. Acts as a cell-cycle regulator of Wnt signaling pathway during G2/M phase by mediating the phosphorylation of LRP6 at 'Ser-1490', leading to the activation of the Wnt signaling pathway. Acts as a regulator of cell cycle progression and cell proliferation via its interaction with CCDN3. Phosphorylates RB1 in vitro, however the relevance of such result remains to be confirmed in vivo. May also play a role in meiosis, neuron differentiation and may indirectly act as a negative regulator of insulin-responsive glucose transport. The chain is Cyclin-dependent kinase 14 (CDK14) from Dasypus novemcinctus (Nine-banded armadillo).